Consider the following 371-residue polypeptide: Chitin deacetylase (371 aa).

The signal sequence occupies residues 1–20; that stretch reads MLCRLFTLFITAALACCVAA. The segment at 73 to 112 is disordered; it reads PKPEPEPTAVPTMAPEPTTVPPTEPSGTYPPETTPTVEPT. Low complexity-rich tracts occupy residues 79–89 and 102–112; these read PTAVPTMAPEP and PPETTPTVEPT. A disulfide bridge connects residues Cys-164 and Cys-358. Asn-167 carries N-linked (GlcNAc...) asparagine glycosylation. Residues 168–353 enclose the NodB homology domain; sequence GTIALTFDDG…EIKKRGLRAV (186 aa). Catalysis depends on Asp-175, which acts as the Proton acceptor. Asp-175 lines the acetate pocket. The Co(2+) site is built by Asp-176, His-228, and His-232. N-linked (GlcNAc...) asparagine glycosylation is present at Asn-239. Position 270 (Tyr-270) interacts with acetate. His-327 functions as the Proton donor in the catalytic mechanism.

The protein belongs to the polysaccharide deacetylase family. It depends on Co(2+) as a cofactor.

It catalyses the reaction [(1-&gt;4)-N-acetyl-beta-D-glucosaminyl](n) + n H2O = chitosan + n acetate. In terms of biological role, hydrolyzes the N-acetamido groups of N-acetyl-D-glucosamine residues in chitin to form chitosan and acetate. This is Chitin deacetylase from Arthroderma benhamiae (strain ATCC MYA-4681 / CBS 112371) (Trichophyton mentagrophytes).